We begin with the raw amino-acid sequence, 154 residues long: Probable chemoreceptor glutamine deamidase CheD (154 aa).

This sequence belongs to the CheD family.

The enzyme catalyses L-glutaminyl-[protein] + H2O = L-glutamyl-[protein] + NH4(+). Its function is as follows. Probably deamidates glutamine residues to glutamate on methyl-accepting chemotaxis receptors (MCPs), playing an important role in chemotaxis. The polypeptide is Probable chemoreceptor glutamine deamidase CheD (Methanococcus maripaludis (strain C5 / ATCC BAA-1333)).